Here is a 313-residue protein sequence, read N- to C-terminus: E3 ubiquitin-protein ligase SGIP1 (313 aa).

Residues 16–65 enclose the F-box domain; the sequence is REYSKEIPIDLLIEIFSRLSTGDIARCRCVSKIWSSVPRLRDFTELFLKI.

Interacts with SGS3 in cytoplasmic granules.

The protein localises to the cytoplasmic granule. The catalysed reaction is S-ubiquitinyl-[E2 ubiquitin-conjugating enzyme]-L-cysteine + [acceptor protein]-L-lysine = [E2 ubiquitin-conjugating enzyme]-L-cysteine + N(6)-ubiquitinyl-[acceptor protein]-L-lysine.. The protein operates within protein degradation; proteasomal ubiquitin-dependent pathway. Its pathway is protein modification; protein ubiquitination. Its function is as follows. E3 ubiquitin-protein ligase which triggers the ubiquitination and subsequent degradation of SGS3 in response to heat. Involved in the mechanisms necessary for quick response to heat and subsequent heritable transgenerational memory of heat acclimation (global warming) such as early flowering and attenuated immunity; this process includes epigenetic regulation as well as post-transcriptional gene silencing (PTGS). In response to heat, HSFA2 is activated and promotes the expression of REF6 which in turn derepresses HSFA2, thus establishing an inheritable feedback loop able to trigger SGIP1 and subsequent SGIP1-mediated SGS3 degradation; this prevents the biosynthesis of trans-acting siRNA (tasiRNA) and leads to the release of HTT5, which drives early flowering but attenuates immunity. This Arabidopsis thaliana (Mouse-ear cress) protein is E3 ubiquitin-protein ligase SGIP1.